Consider the following 820-residue polypeptide: Inhibitor of nuclear factor kappa-B kinase epsilon subunit homolog 1 (820 aa).

The Protein kinase domain maps to 21–299 (LFNDESIGKG…TDIFEFQPVT (279 aa)). ATP contacts are provided by residues 27–35 (IGKGAYSEV) and lysine 49. The Proton acceptor role is filled by aspartate 149. Residues 758-798 (SPNKEQFPKPEQDSILESSIDEGSTSFESTPPSSPPDVGSN) are disordered.

Belongs to the protein kinase superfamily. Ser/Thr protein kinase family. In terms of assembly, interacts with allo-1 (via N-terminus); the interaction is direct. As to expression, expressed in oocytes.

Its subcellular location is the cytoplasm. The catalysed reaction is L-seryl-[protein] + ATP = O-phospho-L-seryl-[protein] + ADP + H(+). It carries out the reaction L-threonyl-[protein] + ATP = O-phospho-L-threonyl-[protein] + ADP + H(+). In terms of biological role, serine/threonine-protein kinase, which plays a role in regulating allophagy, an autophagic process in which paternal organelles, including mitochondria and membranous organelles, are degraded in embryos. Phosphorylates the allophagy receptor allo-1, which is required for allophagy. The chain is Inhibitor of nuclear factor kappa-B kinase epsilon subunit homolog 1 from Caenorhabditis elegans.